The chain runs to 460 residues: Cysteine--tRNA ligase (460 aa).

Cysteine 28 provides a ligand contact to Zn(2+). A 'HIGH' region motif is present at residues 30-40 (MTVYDYCHLGH). Cysteine 209, histidine 234, and glutamate 238 together coordinate Zn(2+). The 'KMSKS' region motif lies at 266–270 (KMSKS). Lysine 269 contacts ATP.

It belongs to the class-I aminoacyl-tRNA synthetase family. In terms of assembly, monomer. Requires Zn(2+) as cofactor.

The protein resides in the cytoplasm. It carries out the reaction tRNA(Cys) + L-cysteine + ATP = L-cysteinyl-tRNA(Cys) + AMP + diphosphate. The sequence is that of Cysteine--tRNA ligase from Pseudomonas putida (strain W619).